The primary structure comprises 93 residues: MKLFLVLIILLFEVLTDGARLKKCFNNVTGYCRKKCKVGERYEIGCLSGKLCCINYEEEKEHVSFKKPHQHSGEKLSVQQDYIILPTVTIFTV.

The N-terminal stretch at 1 to 18 is a signal peptide; that stretch reads MKLFLVLIILLFEVLTDG. Cystine bridges form between Cys24/Cys52, Cys32/Cys46, and Cys36/Cys53.

The protein belongs to the beta-defensin family.

It localises to the secreted. Its function is as follows. Has antibacterial activity. The sequence is that of Beta-defensin 128 (DEFB128) from Pongo pygmaeus (Bornean orangutan).